The primary structure comprises 353 residues: Photosystem II protein D1 (353 aa).

The residue at position 2 (threonine 2) is an N-acetylthreonine. The residue at position 2 (threonine 2) is a Phosphothreonine. 3 helical membrane-spanning segments follow: residues 29 to 46 (YIGWFGVLMIPTLLTATS), 118 to 133 (HFLLGVACYMGREWEL), and 142 to 156 (WIAVAYSAPVAAATA). Histidine 118 is a binding site for chlorophyll a. Tyrosine 126 serves as a coordination point for pheophytin a. [CaMn4O5] cluster contacts are provided by aspartate 170 and glutamate 189. Residues 197-218 (FHMLGVAGVFGGSLFSAMHGSL) form a helical membrane-spanning segment. Histidine 198 lines the chlorophyll a pocket. A quinone-binding positions include histidine 215 and 264 to 265 (SF). Histidine 215 contributes to the Fe cation binding site. Residue histidine 272 coordinates Fe cation. A helical membrane pass occupies residues 274 to 288 (FLAAWPVVGIWFTAL). Residues histidine 332, glutamate 333, aspartate 342, and alanine 344 each contribute to the [CaMn4O5] cluster site. Positions 345–353 (AVEAPSTNG) are excised as a propeptide.

The protein belongs to the reaction center PufL/M/PsbA/D family. PSII is composed of 1 copy each of membrane proteins PsbA, PsbB, PsbC, PsbD, PsbE, PsbF, PsbH, PsbI, PsbJ, PsbK, PsbL, PsbM, PsbT, PsbX, PsbY, PsbZ, Psb30/Ycf12, at least 3 peripheral proteins of the oxygen-evolving complex and a large number of cofactors. It forms dimeric complexes. The D1/D2 heterodimer binds P680, chlorophylls that are the primary electron donor of PSII, and subsequent electron acceptors. It shares a non-heme iron and each subunit binds pheophytin, quinone, additional chlorophylls, carotenoids and lipids. D1 provides most of the ligands for the Mn4-Ca-O5 cluster of the oxygen-evolving complex (OEC). There is also a Cl(-1) ion associated with D1 and D2, which is required for oxygen evolution. The PSII complex binds additional chlorophylls, carotenoids and specific lipids. is required as a cofactor. Tyr-161 forms a radical intermediate that is referred to as redox-active TyrZ, YZ or Y-Z. Post-translationally, C-terminally processed by CTPA; processing is essential to allow assembly of the oxygen-evolving complex and thus photosynthetic growth.

It localises to the plastid. Its subcellular location is the chloroplast thylakoid membrane. It catalyses the reaction 2 a plastoquinone + 4 hnu + 2 H2O = 2 a plastoquinol + O2. Photosystem II (PSII) is a light-driven water:plastoquinone oxidoreductase that uses light energy to abstract electrons from H(2)O, generating O(2) and a proton gradient subsequently used for ATP formation. It consists of a core antenna complex that captures photons, and an electron transfer chain that converts photonic excitation into a charge separation. The D1/D2 (PsbA/PsbD) reaction center heterodimer binds P680, the primary electron donor of PSII as well as several subsequent electron acceptors. The sequence is that of Photosystem II protein D1 from Nymphaea alba (White water-lily).